A 483-amino-acid chain; its full sequence is Serine/threonine-protein phosphatase 2A regulatory subunit phr2AB (483 aa).

WD repeat units follow at residues Ser22–Lys61 and Glu88–Val129. The disordered stretch occupies residues Ser132–Pro152. 4 WD repeats span residues Ala206 to Asn244, Asp255 to Asn295, Glu314 to Lys352, and Glu369 to Leu410. Residues Thr421–Ile443 are disordered. Positions Ser433–Ile443 are enriched in basic and acidic residues. The stretch at Glu449–Lys483 is one WD 7 repeat.

The protein belongs to the phosphatase 2A regulatory subunit B family. PP2A consists of a trimeric holoenzyme, composed of a 37 kDa catalytic subunit (C subunit) and a 65 kDa constant regulatory subunit (A subunit), that associates with a variety of regulatory subunits (B subunit) such as phr2AB (B55) and psrA (B56 homolog). The trimer may partially dissociates into a core 'AC' dimer equally active compared to the trimer.

It is found in the cytoplasm. The protein resides in the cytosol. The protein localises to the cytoskeleton. It localises to the microtubule organizing center. Its subcellular location is the centrosome. The B regulatory subunit might modulate substrate selectivity and catalytic activity, and might also direct the localization of the catalytic enzyme to a particular subcellular compartment. This chain is Serine/threonine-protein phosphatase 2A regulatory subunit phr2AB (phr2aB), found in Dictyostelium discoideum (Social amoeba).